We begin with the raw amino-acid sequence, 85 residues long: Cytochrome c6 (85 aa).

Positions 14, 17, 18, and 58 each coordinate heme c.

This sequence belongs to the cytochrome c family. PetJ subfamily. In terms of assembly, monomer. In terms of processing, binds 1 heme c group covalently per subunit.

It is found in the cellular thylakoid lumen. Its function is as follows. Functions as an electron carrier between membrane-bound cytochrome b6-f and photosystem I in oxygenic photosynthesis. The polypeptide is Cytochrome c6 (petJ) (Leptolyngbya boryana (Plectonema boryanum)).